Reading from the N-terminus, the 488-residue chain is Protein nucleotidyltransferase YdiU (488 aa).

ATP contacts are provided by Gly91, Gly93, Arg94, Lys114, Asp126, Gly127, Arg177, and Arg184. The Proton acceptor role is filled by Asp253. The Mg(2+) site is built by Asn254 and Asp263. Asp263 provides a ligand contact to ATP.

Belongs to the SELO family. The cofactor is Mg(2+). Requires Mn(2+) as cofactor.

It carries out the reaction L-seryl-[protein] + ATP = 3-O-(5'-adenylyl)-L-seryl-[protein] + diphosphate. The catalysed reaction is L-threonyl-[protein] + ATP = 3-O-(5'-adenylyl)-L-threonyl-[protein] + diphosphate. The enzyme catalyses L-tyrosyl-[protein] + ATP = O-(5'-adenylyl)-L-tyrosyl-[protein] + diphosphate. It catalyses the reaction L-histidyl-[protein] + UTP = N(tele)-(5'-uridylyl)-L-histidyl-[protein] + diphosphate. It carries out the reaction L-seryl-[protein] + UTP = O-(5'-uridylyl)-L-seryl-[protein] + diphosphate. The catalysed reaction is L-tyrosyl-[protein] + UTP = O-(5'-uridylyl)-L-tyrosyl-[protein] + diphosphate. In terms of biological role, nucleotidyltransferase involved in the post-translational modification of proteins. It can catalyze the addition of adenosine monophosphate (AMP) or uridine monophosphate (UMP) to a protein, resulting in modifications known as AMPylation and UMPylation. The sequence is that of Protein nucleotidyltransferase YdiU from Bacillus cereus (strain B4264).